Consider the following 359-residue polypeptide: DNA-directed RNA polymerase RPB3-11 homolog (359 aa).

It in the N-terminal section; belongs to the archaeal RpoD/eukaryotic RPB3 RNA polymerase subunit family. This sequence in the C-terminal section; belongs to the archaeal RpoL/eukaryotic RPB11/RPC19 RNA polymerase subunit family. Part of the viral DNA-directed RNA polymerase that consists of 8 polII-like subunits (RPB1, RPB2, RPB3, RPB5, RPB6, RPB7, RPB9, RPB10), a capping enzyme and a termination factor.

Its subcellular location is the host cytoplasm. The protein localises to the virion. Its function is as follows. Component of the DNA-directed RNA polymerase (RNAP) that catalyzes the transcription in the cytoplasm of viral DNA into RNA using the four ribonucleoside triphosphates as substrates. In Ornithodoros (relapsing fever ticks), this protein is DNA-directed RNA polymerase RPB3-11 homolog.